A 609-amino-acid chain; its full sequence is Sodium- and chloride-dependent GABA transporter 2 (609 aa).

Residues methionine 1–glutamate 13 show a composition bias toward polar residues. A disordered region spans residues methionine 1–lysine 23. At methionine 1 to glutamate 40 the chain is on the cytoplasmic side. The next 3 membrane-spanning stretches (helical) occupy residues phenylalanine 41–leucine 61, glycine 68–leucine 88, and isoleucine 121–phenylalanine 141. The Extracellular segment spans residues serine 142–tryptophan 206. Cysteine 153 and cysteine 162 are oxidised to a cystine. N-linked (GlcNAc...) asparagine glycosylation is found at asparagine 169 and asparagine 173. 2 helical membrane passes run glutamate 207–valine 227 and valine 233–valine 253. A glycan (N-linked (GlcNAc...) asparagine) is linked at asparagine 269. 7 helical membrane passes run alanine 282–serine 302, phenylalanine 319–methionine 339, valine 366–leucine 386, valine 418–glycine 438, glycine 453–alanine 473, proline 490–phenylalanine 510, and tryptophan 528–tryptophan 548. Residues serine 549–cysteine 609 lie on the Cytoplasmic side of the membrane. Phosphothreonine is present on threonine 594. Residue serine 598 is modified to Phosphoserine.

This sequence belongs to the sodium:neurotransmitter symporter (SNF) (TC 2.A.22) family. SLC6A13 subfamily.

The protein localises to the cell membrane. The protein resides in the basolateral cell membrane. The catalysed reaction is 4-aminobutanoate(out) + chloride(out) + 2 Na(+)(out) = 4-aminobutanoate(in) + chloride(in) + 2 Na(+)(in). The enzyme catalyses taurine(out) + chloride(out) + 2 Na(+)(out) = taurine(in) + chloride(in) + 2 Na(+)(in). It catalyses the reaction beta-alanine(out) + chloride(out) + 2 Na(+)(out) = beta-alanine(in) + chloride(in) + 2 Na(+)(in). It carries out the reaction hypotaurine(out) + chloride(out) + 2 Na(+)(out) = hypotaurine(in) + chloride(in) + 2 Na(+)(in). Mediates sodium- and chloride-dependent transport of gamma-aminobutyric acid (GABA). Can also mediate transport of beta-alanine, taurine and hypotaurine. The sequence is that of Sodium- and chloride-dependent GABA transporter 2 (SLC6A13) from Macaca fascicularis (Crab-eating macaque).